The primary structure comprises 421 residues: UDP-N-acetylglucosamine 1-carboxyvinyltransferase (421 aa).

22-23 lines the phosphoenolpyruvate pocket; it reads KN. R93 contacts UDP-N-acetyl-alpha-D-glucosamine. The Proton donor role is filled by C117. The residue at position 117 (C117) is a 2-(S-cysteinyl)pyruvic acid O-phosphothioketal. Residues 122–126, D308, and I330 contribute to the UDP-N-acetyl-alpha-D-glucosamine site; that span reads RPVDL.

It belongs to the EPSP synthase family. MurA subfamily.

It is found in the cytoplasm. It carries out the reaction phosphoenolpyruvate + UDP-N-acetyl-alpha-D-glucosamine = UDP-N-acetyl-3-O-(1-carboxyvinyl)-alpha-D-glucosamine + phosphate. Its pathway is cell wall biogenesis; peptidoglycan biosynthesis. In terms of biological role, cell wall formation. Adds enolpyruvyl to UDP-N-acetylglucosamine. The sequence is that of UDP-N-acetylglucosamine 1-carboxyvinyltransferase from Pseudomonas putida (strain W619).